Here is a 1901-residue protein sequence, read N- to C-terminus: A-kinase anchor protein 11 (1901 aa).

Phosphoserine occurs at positions 18, 422, 433, 444, and 448. The segment at 407–443 (ALPANVRKPTPRKPESPYGNLCDAPDSPRPVKASRED) is disordered. Disordered stretches follow at residues 843 to 864 (NPGN…SSSK) and 971 to 993 (LPVS…DSQN). Residues T981 and T1100 each carry the phosphothreonine modification. Positions 1131 to 1153 (EFAPATPPSTPHNSSVGSLSENE) are disordered. The span at 1141 to 1153 (PHNSSVGSLSENE) shows a compositional bias: polar residues. Residues S1171, S1176, S1177, S1242, and S1337 each carry the phosphoserine modification. At T1485 the chain carries Phosphothreonine. Phosphoserine is present on S1580. Residues 1650 to 1663 (LAEKIVAEAIEKAE) are PKA-RII subunit binding domain. Positions 1708 to 1805 (KEIEDFQSTE…HEDEVEGLGQ (98 aa)) are disordered. The span at 1713–1740 (FQSTESVSSQQMNLSIGDDSTGSWSNLS) shows a compositional bias: polar residues. Residues 1747 to 1756 (DESSSFHHLS) show a composition bias toward basic and acidic residues. The segment covering 1757-1772 (ESNGNSSSWSSLGLEG) has biased composition (low complexity). The span at 1787 to 1801 (DGPDDKDEEHEDEVE) shows a compositional bias: acidic residues.

It belongs to the AKAP110 family. In terms of tissue distribution, expressed in heart, brain, lung, liver, kidney, testis and ovary. Weakly expressed in skeletal muscle, pancreas and spleen.

The protein resides in the cytoplasm. It localises to the cytoskeleton. It is found in the microtubule organizing center. Its subcellular location is the centrosome. Its function is as follows. Binds to type II regulatory subunits of protein kinase A and anchors/targets them. The sequence is that of A-kinase anchor protein 11 (AKAP11) from Homo sapiens (Human).